A 221-amino-acid chain; its full sequence is ATP-dependent dethiobiotin synthetase BioD (221 aa).

ATP is bound at residue 11–16; the sequence is DVGKTF. Position 15 (threonine 15) interacts with Mg(2+). Lysine 35 is an active-site residue. Threonine 39 serves as a coordination point for substrate. Residues aspartate 44 and 103–106 each bind ATP; that span reads EGAG. Residues aspartate 44 and glutamate 103 each coordinate Mg(2+).

Belongs to the dethiobiotin synthetase family. Homodimer. Requires Mg(2+) as cofactor.

Its subcellular location is the cytoplasm. It catalyses the reaction (7R,8S)-7,8-diammoniononanoate + CO2 + ATP = (4R,5S)-dethiobiotin + ADP + phosphate + 3 H(+). It functions in the pathway cofactor biosynthesis; biotin biosynthesis; biotin from 7,8-diaminononanoate: step 1/2. Catalyzes a mechanistically unusual reaction, the ATP-dependent insertion of CO2 between the N7 and N8 nitrogen atoms of 7,8-diaminopelargonic acid (DAPA, also called 7,8-diammoniononanoate) to form a ureido ring. This chain is ATP-dependent dethiobiotin synthetase BioD, found in Leptospira interrogans serogroup Icterohaemorrhagiae serovar copenhageni (strain Fiocruz L1-130).